Here is a 176-residue protein sequence, read N- to C-terminus: 2-C-methyl-D-erythritol 2,4-cyclodiphosphate synthase (176 aa).

The a divalent metal cation site is built by Asp-23, His-25, and His-60. Residue 23 to 25 (DSH) coordinates 4-CDP-2-C-methyl-D-erythritol 2-phosphate. 149–152 (TSGE) provides a ligand contact to 4-CDP-2-C-methyl-D-erythritol 2-phosphate.

The protein belongs to the IspF family. As to quaternary structure, homotrimer. A divalent metal cation is required as a cofactor.

It carries out the reaction 4-CDP-2-C-methyl-D-erythritol 2-phosphate = 2-C-methyl-D-erythritol 2,4-cyclic diphosphate + CMP. It functions in the pathway isoprenoid biosynthesis; isopentenyl diphosphate biosynthesis via DXP pathway; isopentenyl diphosphate from 1-deoxy-D-xylulose 5-phosphate: step 4/6. Involved in the biosynthesis of isopentenyl diphosphate (IPP) and dimethylallyl diphosphate (DMAPP), two major building blocks of isoprenoid compounds. Catalyzes the conversion of 4-diphosphocytidyl-2-C-methyl-D-erythritol 2-phosphate (CDP-ME2P) to 2-C-methyl-D-erythritol 2,4-cyclodiphosphate (ME-CPP) with a corresponding release of cytidine 5-monophosphate (CMP). The chain is 2-C-methyl-D-erythritol 2,4-cyclodiphosphate synthase from Chlamydia felis (strain Fe/C-56) (Chlamydophila felis).